We begin with the raw amino-acid sequence, 168 residues long: Phosphopantetheine adenylyltransferase (168 aa).

T14 contributes to the substrate binding site. ATP contacts are provided by residues 14–15 (TF) and H22. Substrate contacts are provided by K46, L78, and R92. ATP-binding positions include 93–95 (GLR), E103, and 128–134 (YSFISSS).

The protein belongs to the bacterial CoaD family. As to quaternary structure, homohexamer. Requires Mg(2+) as cofactor.

It is found in the cytoplasm. It carries out the reaction (R)-4'-phosphopantetheine + ATP + H(+) = 3'-dephospho-CoA + diphosphate. The protein operates within cofactor biosynthesis; coenzyme A biosynthesis; CoA from (R)-pantothenate: step 4/5. In terms of biological role, reversibly transfers an adenylyl group from ATP to 4'-phosphopantetheine, yielding dephospho-CoA (dPCoA) and pyrophosphate. The chain is Phosphopantetheine adenylyltransferase from Xanthomonas euvesicatoria pv. vesicatoria (strain 85-10) (Xanthomonas campestris pv. vesicatoria).